A 476-amino-acid polypeptide reads, in one-letter code: Aspartyl/glutamyl-tRNA(Asn/Gln) amidotransferase subunit B (476 aa).

The protein belongs to the GatB/GatE family. GatB subfamily. Heterotrimer of A, B and C subunits.

The catalysed reaction is L-glutamyl-tRNA(Gln) + L-glutamine + ATP + H2O = L-glutaminyl-tRNA(Gln) + L-glutamate + ADP + phosphate + H(+). The enzyme catalyses L-aspartyl-tRNA(Asn) + L-glutamine + ATP + H2O = L-asparaginyl-tRNA(Asn) + L-glutamate + ADP + phosphate + 2 H(+). Its function is as follows. Allows the formation of correctly charged Asn-tRNA(Asn) or Gln-tRNA(Gln) through the transamidation of misacylated Asp-tRNA(Asn) or Glu-tRNA(Gln) in organisms which lack either or both of asparaginyl-tRNA or glutaminyl-tRNA synthetases. The reaction takes place in the presence of glutamine and ATP through an activated phospho-Asp-tRNA(Asn) or phospho-Glu-tRNA(Gln). This chain is Aspartyl/glutamyl-tRNA(Asn/Gln) amidotransferase subunit B, found in Neisseria meningitidis serogroup B (strain ATCC BAA-335 / MC58).